The primary structure comprises 180 residues: UPF0227 protein PC1_2487 (180 aa).

It belongs to the UPF0227 family.

The polypeptide is UPF0227 protein PC1_2487 (Pectobacterium carotovorum subsp. carotovorum (strain PC1)).